Here is a 162-residue protein sequence, read N- to C-terminus: Large ribosomal subunit protein uL10 (162 aa).

It belongs to the universal ribosomal protein uL10 family. As to quaternary structure, part of the ribosomal stalk of the 50S ribosomal subunit. The N-terminus interacts with L11 and the large rRNA to form the base of the stalk. The C-terminus forms an elongated spine to which L12 dimers bind in a sequential fashion forming a multimeric L10(L12)X complex.

Its function is as follows. Forms part of the ribosomal stalk, playing a central role in the interaction of the ribosome with GTP-bound translation factors. This Phytoplasma mali (strain AT) protein is Large ribosomal subunit protein uL10.